We begin with the raw amino-acid sequence, 270 residues long: uncharacterized protein (270 aa).

A signal peptide spans 1–22 (MEYIKKIALYMSVLLLIIFIGG). Cysteine 23 carries the N-palmitoyl cysteine lipid modification. Cysteine 23 carries S-diacylglycerol cysteine lipidation.

Belongs to the staphylococcal tandem lipoprotein family.

Its subcellular location is the cell membrane. This is an uncharacterized protein from Staphylococcus aureus (strain N315).